A 155-amino-acid chain; its full sequence is Interferon gamma (155 aa).

An N-terminal signal peptide occupies residues 1-22 (MNATHCILALQLFLMAVSGCYC). N-linked (GlcNAc...) asparagine glycans are attached at residues Asn-38 and Asn-90.

Belongs to the type II (or gamma) interferon family. In terms of assembly, homodimer. Interacts with IFNGR1 (via extracellular domain); this interaction promotes IFNGR1 dimerization. As to expression, released primarily from activated T lymphocytes.

Its subcellular location is the secreted. Its function is as follows. Type II interferon produced by immune cells such as T-cells and NK cells that plays crucial roles in antimicrobial, antiviral, and antitumor responses by activating effector immune cells and enhancing antigen presentation. Primarily signals through the JAK-STAT pathway after interaction with its receptor IFNGR1 to affect gene regulation. Upon IFNG binding, IFNGR1 intracellular domain opens out to allow association of downstream signaling components JAK2, JAK1 and STAT1, leading to STAT1 activation, nuclear translocation and transcription of IFNG-regulated genes. Many of the induced genes are transcription factors such as IRF1 that are able to further drive regulation of a next wave of transcription. Plays a role in class I antigen presentation pathway by inducing a replacement of catalytic proteasome subunits with immunoproteasome subunits. In turn, increases the quantity, quality, and repertoire of peptides for class I MHC loading. Increases the efficiency of peptide generation also by inducing the expression of activator PA28 that associates with the proteasome and alters its proteolytic cleavage preference. Up-regulates as well MHC II complexes on the cell surface by promoting expression of several key molecules such as cathepsins B/CTSB, H/CTSH, and L/CTSL. Participates in the regulation of hematopoietic stem cells during development and under homeostatic conditions by affecting their development, quiescence, and differentiation. This Mus musculus (Mouse) protein is Interferon gamma (Ifng).